Consider the following 145-residue polypeptide: Group IID secretory phospholipase A2 (145 aa).

An N-terminal signal peptide occupies residues 1–20 (MELALLCGLVVMAGVIPIQG). 7 cysteine pairs are disulfide-bonded: Cys46-Cys138, Cys48-Cys64, Cys63-Cys118, Cys69-Cys145, Cys70-Cys111, Cys79-Cys104, and Cys97-Cys109. The Ca(2+) site is built by His47, Gly49, and Gly51. The active site involves His67. Asp68 is a Ca(2+) binding site. A glycan (N-linked (GlcNAc...) asparagine) is linked at Asn89. Asp112 is a catalytic residue.

It belongs to the phospholipase A2 family. The cofactor is Ca(2+). In terms of tissue distribution, highly expressed in pancreas and spleen and less abundantly in colon, thymus, placenta, small intestine, and prostate.

It localises to the secreted. The catalysed reaction is a 1,2-diacyl-sn-glycero-3-phosphoethanolamine + H2O = a 1-acyl-sn-glycero-3-phosphoethanolamine + a fatty acid + H(+). It carries out the reaction 1-hexadecanoyl-2-(9Z-octadecenoyl)-sn-glycero-3-phosphoethanolamine + H2O = 1-hexadecanoyl-sn-glycero-3-phosphoethanolamine + (9Z)-octadecenoate + H(+). It catalyses the reaction 1-hexadecanoyl-2-(9Z,12Z-octadecadienoyl)-sn-glycero-3-phosphoethanolamine + H2O = 1-hexadecanoyl-sn-glycero-3-phosphoethanolamine + (9Z,12Z)-octadecadienoate + H(+). The enzyme catalyses 1,2-dihexadecanoyl-sn-glycero-3-phospho-(1'-sn-glycerol) + H2O = 1-hexadecanoyl-sn-glycero-3-phospho-(1'-sn-glycerol) + hexadecanoate + H(+). The catalysed reaction is 1-hexadecanoyl-2-(9Z-octadecenoyl)-sn-glycero-3-phospho-(1'-sn-glycerol) + H2O = 1-hexadecanoyl-sn-glycero-3-phospho-(1'-sn-glycerol) + (9Z)-octadecenoate + H(+). It carries out the reaction a 1,2-diacyl-sn-glycero-3-phosphocholine + H2O = a 1-acyl-sn-glycero-3-phosphocholine + a fatty acid + H(+). It catalyses the reaction 1,2-dihexadecanoyl-sn-glycero-3-phosphocholine + H2O = 1-hexadecanoyl-sn-glycero-3-phosphocholine + hexadecanoate + H(+). The enzyme catalyses 1-hexadecanoyl-2-(9Z-octadecenoyl)-sn-glycero-3-phosphocholine + H2O = 1-hexadecanoyl-sn-glycero-3-phosphocholine + (9Z)-octadecenoate + H(+). The catalysed reaction is 1-hexadecanoyl-2-(9Z,12Z-octadecadienoyl)-sn-glycero-3-phosphocholine + H2O = (9Z,12Z)-octadecadienoate + 1-hexadecanoyl-sn-glycero-3-phosphocholine + H(+). It carries out the reaction 1-hexadecanoyl-2-(4Z,7Z,10Z,13Z,16Z,19Z-docosahexaenoyl)-sn-glycero-3-phosphocholine + H2O = (4Z,7Z,10Z,13Z,16Z,19Z)-docosahexaenoate + 1-hexadecanoyl-sn-glycero-3-phosphocholine + H(+). Secretory calcium-dependent phospholipase A2 that primarily targets extracellular lipids, exerting anti-inflammatory and immunosuppressive functions. Hydrolyzes the ester bond of the fatty acyl group attached at sn-2 position of phospholipids (phospholipase A2 activity) with preference for phosphatidylethanolamines and phosphatidylglycerols over phosphatidylcholines. In draining lymph nodes, selectively hydrolyzes diacyl and alkenyl forms of phosphatidylethanolamines, releasing omega-3 polyunsaturated fatty acids (PUFAs) such as eicosapentaenoate and docosahexaenoate that are precursors of the anti-inflammatory lipid mediators, resolvins. During the resolution phase of acute inflammation drives docosahexaenoate-derived resolvin D1 synthesis, which suppresses dendritic cell activation and T-helper 1 immune response. May act in an autocrine and paracrine manner. Via a mechanism independent of its catalytic activity, promotes differentiation of regulatory T cells (Tregs) and participates in the maintenance of immune tolerance. May contribute to lipid remodeling of cellular membranes and generation of lipid mediators involved in pathogen clearance. Displays bactericidal activity against Gram-positive bacteria by directly hydrolyzing phospholipids of the bacterial membrane. The protein is Group IID secretory phospholipase A2 (PLA2G2D) of Homo sapiens (Human).